The sequence spans 293 residues: Immediate early response gene 5-like protein (293 aa).

The protein belongs to the IER family.

This is Immediate early response gene 5-like protein (ier5l) from Xenopus laevis (African clawed frog).